The chain runs to 720 residues: Exocyst complex component 7 (720 aa).

2 coiled-coil regions span residues 5–34 and 63–83; these read EDAS…SLEK and VHKQ…TLSN. Residue Ser-133 is modified to Phosphoserine. The segment at 249–268 is disordered; it reads SPAVQTKRKETPTKKAPKRP.

Belongs to the EXO70 family.

Its subcellular location is the cytoplasm. It is found in the cytosol. The protein localises to the cell membrane. It localises to the midbody. The protein resides in the midbody ring. Functionally, component of the exocyst complex involved in the docking of exocytic vesicles with fusion sites on the plasma membrane. It is required for neuron survival and plays an essential role in telencephalon development. The polypeptide is Exocyst complex component 7 (exoc7) (Danio rerio (Zebrafish)).